A 529-amino-acid polypeptide reads, in one-letter code: Bifunctional purine biosynthesis protein PurH (529 aa).

The MGS-like domain maps to 8-158 (PSAPDLVAPK…KNHGYVAVCT (151 aa)).

This sequence belongs to the PurH family.

The catalysed reaction is (6R)-10-formyltetrahydrofolate + 5-amino-1-(5-phospho-beta-D-ribosyl)imidazole-4-carboxamide = 5-formamido-1-(5-phospho-D-ribosyl)imidazole-4-carboxamide + (6S)-5,6,7,8-tetrahydrofolate. It catalyses the reaction IMP + H2O = 5-formamido-1-(5-phospho-D-ribosyl)imidazole-4-carboxamide. It functions in the pathway purine metabolism; IMP biosynthesis via de novo pathway; 5-formamido-1-(5-phospho-D-ribosyl)imidazole-4-carboxamide from 5-amino-1-(5-phospho-D-ribosyl)imidazole-4-carboxamide (10-formyl THF route): step 1/1. Its pathway is purine metabolism; IMP biosynthesis via de novo pathway; IMP from 5-formamido-1-(5-phospho-D-ribosyl)imidazole-4-carboxamide: step 1/1. The polypeptide is Bifunctional purine biosynthesis protein PurH (Caulobacter vibrioides (strain ATCC 19089 / CIP 103742 / CB 15) (Caulobacter crescentus)).